Consider the following 398-residue polypeptide: tRNA-specific 2-thiouridylase MnmA (398 aa).

Residues 18–25 (AMSGGVDS) and Leu-44 each bind ATP. Cys-112 acts as the Nucleophile in catalysis. A disulfide bridge connects residues Cys-112 and Cys-213. An ATP-binding site is contributed by Gly-136. The interaction with tRNA stretch occupies residues 163 to 165 (RDQ). Catalysis depends on Cys-213, which acts as the Cysteine persulfide intermediate.

This sequence belongs to the MnmA/TRMU family.

It localises to the cytoplasm. It carries out the reaction S-sulfanyl-L-cysteinyl-[protein] + uridine(34) in tRNA + AH2 + ATP = 2-thiouridine(34) in tRNA + L-cysteinyl-[protein] + A + AMP + diphosphate + H(+). Catalyzes the 2-thiolation of uridine at the wobble position (U34) of tRNA, leading to the formation of s(2)U34. The protein is tRNA-specific 2-thiouridylase MnmA of Agrobacterium fabrum (strain C58 / ATCC 33970) (Agrobacterium tumefaciens (strain C58)).